The chain runs to 1885 residues: Chitin synthase 5 (1885 aa).

The region spanning 1–789 (MATRGNVPAH…SIALTGSQAA (789 aa)) is the Myosin motor domain. 99–106 (GESGSGKT) is an ATP binding site. N-linked (GlcNAc...) asparagine glycosylation is found at asparagine 219 and asparagine 429. The tract at residues 601 to 649 (KPLRMPSVSRKKHDQLRRMASRRADRSPAPQEEEPLPGTEEAKVRRTKP) is disordered. Residues 609 to 621 (SRKKHDQLRRMAS) are compositionally biased toward basic residues. The tract at residues 666 to 690 (LDNITKSLTAPNVNNYFVFCLKPND) is actin-binding. An N-linked (GlcNAc...) asparagine glycan is attached at asparagine 668. Residues 794 to 817 (GDIGSPSRPDTPGHNPFSDSKARL) are disordered. 2 helical membrane-spanning segments follow: residues 894-914 (WLAIVYFLTWYLPDFAIKWIG) and 929-949 (FAINLLIWLSCGLVVFFIIVF). The region spanning 957–1016 (QNVYSAAELSAHDGKGKHSAYVAIRGQVFDLGAFMPNHYPKIIPQSSLKKYAGVDATGLF) is the Cytochrome b5 heme-binding domain. N-linked (GlcNAc...) asparagine glycosylation is found at asparagine 1043 and asparagine 1068. Residues 1205–1225 (ILLAVSILLCSVIGFKFFAAL) traverse the membrane as a helical segment. Asparagine 1462 and asparagine 1568 each carry an N-linked (GlcNAc...) asparagine glycan. The next 3 membrane-spanning stretches (helical) occupy residues 1599-1619 (LLSTVVAPVTVAYIAYLIVLL), 1626-1646 (VPLTAFILLGAIYGLQAIIFI), and 1653-1673 (MIGWMIVYILAMPVFSLGLPL). Asparagine 1759 and asparagine 1790 each carry an N-linked (GlcNAc...) asparagine glycan. A DEK-C domain is found at 1827–1882 (LPTDDMLLNEIRDILRTADLMTVTKKGIKQELERRFNVNLDMKRAYIGSATEAILS).

The protein in the N-terminal section; belongs to the TRAFAC class myosin-kinesin ATPase superfamily. Myosin family. In the C-terminal section; belongs to the chitin synthase family. Class V subfamily. In terms of processing, maximal activity requires trypsin activation, suggesting a zymogenic nature.

Its subcellular location is the cell membrane. The protein localises to the membrane. The catalysed reaction is [(1-&gt;4)-N-acetyl-beta-D-glucosaminyl](n) + UDP-N-acetyl-alpha-D-glucosamine = [(1-&gt;4)-N-acetyl-beta-D-glucosaminyl](n+1) + UDP + H(+). In terms of biological role, polymerizes chitin, a structural polymer of the cell wall and septum, by transferring the sugar moiety of UDP-GlcNAc to the non-reducing end of the growing chitin polymer. CHS5 is required for the sustained growth at 37 degrees Celsius and is of critical importance for virulence. Especially important at infection temperatures for maintaining the cell wall integrity of developing yeast buds, elongating tips of hyphae, and random sites of expansion in sclerotic forms. In Exophiala dermatitidis (strain ATCC 34100 / CBS 525.76 / NIH/UT8656) (Black yeast), this protein is Chitin synthase 5.